Reading from the N-terminus, the 418-residue chain is Serine--tRNA ligase (418 aa).

L-serine is bound at residue 226 to 228 (TSE). Residues 257-259 (RRE) and V273 contribute to the ATP site. E280 is an L-serine binding site. An ATP-binding site is contributed by 344-347 (ELTS). L-serine is bound at residue T379.

It belongs to the class-II aminoacyl-tRNA synthetase family. Type-1 seryl-tRNA synthetase subfamily. In terms of assembly, homodimer. The tRNA molecule binds across the dimer.

The protein localises to the cytoplasm. It catalyses the reaction tRNA(Ser) + L-serine + ATP = L-seryl-tRNA(Ser) + AMP + diphosphate + H(+). The catalysed reaction is tRNA(Sec) + L-serine + ATP = L-seryl-tRNA(Sec) + AMP + diphosphate + H(+). The protein operates within aminoacyl-tRNA biosynthesis; selenocysteinyl-tRNA(Sec) biosynthesis; L-seryl-tRNA(Sec) from L-serine and tRNA(Sec): step 1/1. Its function is as follows. Catalyzes the attachment of serine to tRNA(Ser). Is also able to aminoacylate tRNA(Sec) with serine, to form the misacylated tRNA L-seryl-tRNA(Sec), which will be further converted into selenocysteinyl-tRNA(Sec). The polypeptide is Serine--tRNA ligase (Mycobacteroides abscessus (strain ATCC 19977 / DSM 44196 / CCUG 20993 / CIP 104536 / JCM 13569 / NCTC 13031 / TMC 1543 / L948) (Mycobacterium abscessus)).